Reading from the N-terminus, the 97-residue chain is Large ribosomal subunit protein eL21 (97 aa).

This sequence belongs to the eukaryotic ribosomal protein eL21 family.

This Methanosarcina mazei (strain ATCC BAA-159 / DSM 3647 / Goe1 / Go1 / JCM 11833 / OCM 88) (Methanosarcina frisia) protein is Large ribosomal subunit protein eL21.